The primary structure comprises 913 residues: Cadherin-4 (913 aa).

The first 20 residues, 1–20 (MTTGSVLPLLLLGLSGALRA), serve as a signal peptide directing secretion. Positions 21–166 (HREDLTVREA…SSGGLRRQKR (146 aa)) are excised as a propeptide. A glycan (N-linked (GlcNAc...) asparagine) is linked at N146. Cadherin domains lie at 167 to 274 (DWVI…RPEF), 275 to 389 (INQV…PPEF), 390 to 504 (TTST…APYF), 505 to 610 (PSNH…DNAP), and 611 to 721 (QLLP…TVGA). Residues 167 to 731 (DWVIPPINVP…VAAAGLGTGA (565 aa)) are Extracellular-facing. N-linked (GlcNAc...) asparagine glycosylation is found at N280, N409, N554, N629, N658, and N699. The chain crosses the membrane as a helical span at residues 732–753 (IVAILICIVILLIMVLLFVVWM). Over 754–913 (KRREKERHTK…ADMYGGGEED (160 aa)) the chain is Cytoplasmic.

In terms of tissue distribution, distributed widely in mouse tissues with high levels present in brain, skeletal muscle and thymus.

The protein resides in the cell membrane. In terms of biological role, cadherins are calcium-dependent cell adhesion proteins. They preferentially interact with themselves in a homophilic manner in connecting cells; cadherins may thus contribute to the sorting of heterogeneous cell types. May play an important role in retinal development. The polypeptide is Cadherin-4 (Cdh4) (Mus musculus (Mouse)).